The primary structure comprises 370 residues: Tomoregulin-1 (370 aa).

Residues 1 to 36 form the signal peptide; sequence MDGLHPASWMLLLGSLAFWSASSLLLFSLALPGARA. At 37–320 the chain is on the extracellular side; it reads SNQLLSECHN…VPSRQKLTHV (284 aa). N53 is a glycosylation site (N-linked (GlcNAc...) asparagine). 2 consecutive Kazal-like domains span residues 88 to 135 and 179 to 227; these read ICQF…PCFS and VCNI…SCIE. Intrachain disulfides connect C89/C119, C93/C112, C101/C133, C180/C211, C184/C204, C193/C225, C265/C278, C273/C289, and C291/C300. In terms of domain architecture, EGF-like spans 261–301; that stretch reads NYIPCSENYNGYCVHGKCELSYSSQKASCRCDSGYTGQYCD. A helical transmembrane segment spans residues 321–341; it reads LIAAIIGAVQIAIIVAIVMCI. The Cytoplasmic segment spans residues 342–370; the sequence is TRKCPKNNRGRRQKQNLGHFSSDTSSRMV. The disordered stretch occupies residues 349–370; the sequence is NRGRRQKQNLGHFSSDTSSRMV. A compositionally biased stretch (polar residues) spans 356–370; the sequence is QNLGHFSSDTSSRMV.

Belongs to the tomoregulin family. In terms of assembly, interacts with cripto. Expressed at highest levels in brain, and at lower levels in neuroendocrine tissues. Present in neurons from the diencephalon (at protein level).

The protein localises to the cell membrane. Inhibits nodal/nr-1 and bmp signaling during neural patterning through interaction with cripto. This chain is Tomoregulin-1 (tmeff1), found in Xenopus laevis (African clawed frog).